Reading from the N-terminus, the 83-residue chain is Small ribosomal subunit protein bS16 (83 aa).

Belongs to the bacterial ribosomal protein bS16 family.

This Shewanella putrefaciens (strain CN-32 / ATCC BAA-453) protein is Small ribosomal subunit protein bS16.